The chain runs to 312 residues: Beta-ketoacyl-[acyl-carrier-protein] synthase III (312 aa).

Catalysis depends on residues Cys-112 and His-237. The ACP-binding stretch occupies residues 238–242; sequence QANIR. Asn-267 is an active-site residue.

It belongs to the thiolase-like superfamily. FabH family. Homodimer.

It localises to the cytoplasm. The enzyme catalyses malonyl-[ACP] + acetyl-CoA + H(+) = 3-oxobutanoyl-[ACP] + CO2 + CoA. It functions in the pathway lipid metabolism; fatty acid biosynthesis. Catalyzes the condensation reaction of fatty acid synthesis by the addition to an acyl acceptor of two carbons from malonyl-ACP. Catalyzes the first condensation reaction which initiates fatty acid synthesis and may therefore play a role in governing the total rate of fatty acid production. Possesses both acetoacetyl-ACP synthase and acetyl transacylase activities. Its substrate specificity determines the biosynthesis of branched-chain and/or straight-chain of fatty acids. This is Beta-ketoacyl-[acyl-carrier-protein] synthase III from Listeria innocua serovar 6a (strain ATCC BAA-680 / CLIP 11262).